A 396-amino-acid chain; its full sequence is Ribosomal RNA large subunit methyltransferase I (396 aa).

In terms of domain architecture, PUA spans 2 to 81 (TVRLILAKGR…EVIDCAFFIR (80 aa)).

It belongs to the methyltransferase superfamily. RlmI family.

It localises to the cytoplasm. The enzyme catalyses cytidine(1962) in 23S rRNA + S-adenosyl-L-methionine = 5-methylcytidine(1962) in 23S rRNA + S-adenosyl-L-homocysteine + H(+). Its function is as follows. Specifically methylates the cytosine at position 1962 (m5C1962) of 23S rRNA. The protein is Ribosomal RNA large subunit methyltransferase I of Yersinia pseudotuberculosis serotype O:1b (strain IP 31758).